A 393-amino-acid chain; its full sequence is NAD(P)H-quinone oxidoreductase subunit H, chloroplastic (393 aa).

Belongs to the complex I 49 kDa subunit family. As to quaternary structure, NDH is composed of at least 16 different subunits, 5 of which are encoded in the nucleus.

The protein localises to the plastid. Its subcellular location is the chloroplast thylakoid membrane. It catalyses the reaction a plastoquinone + NADH + (n+1) H(+)(in) = a plastoquinol + NAD(+) + n H(+)(out). The catalysed reaction is a plastoquinone + NADPH + (n+1) H(+)(in) = a plastoquinol + NADP(+) + n H(+)(out). NDH shuttles electrons from NAD(P)H:plastoquinone, via FMN and iron-sulfur (Fe-S) centers, to quinones in the photosynthetic chain and possibly in a chloroplast respiratory chain. The immediate electron acceptor for the enzyme in this species is believed to be plastoquinone. Couples the redox reaction to proton translocation, and thus conserves the redox energy in a proton gradient. In Ceratophyllum demersum (Rigid hornwort), this protein is NAD(P)H-quinone oxidoreductase subunit H, chloroplastic.